Consider the following 1225-residue polypeptide: DNA-directed RNA polymerase subunit beta' (1225 aa).

Cys-60, Cys-62, Cys-75, and Cys-78 together coordinate Zn(2+). Asp-450, Asp-452, and Asp-454 together coordinate Mg(2+). Residues Cys-818, Cys-892, Cys-899, and Cys-902 each coordinate Zn(2+).

Belongs to the RNA polymerase beta' chain family. As to quaternary structure, the RNAP catalytic core consists of 2 alpha, 1 beta, 1 beta' and 1 omega subunit. When a sigma factor is associated with the core the holoenzyme is formed, which can initiate transcription. The cofactor is Mg(2+). Requires Zn(2+) as cofactor.

It catalyses the reaction RNA(n) + a ribonucleoside 5'-triphosphate = RNA(n+1) + diphosphate. DNA-dependent RNA polymerase catalyzes the transcription of DNA into RNA using the four ribonucleoside triphosphates as substrates. The protein is DNA-directed RNA polymerase subunit beta' of Streptococcus pneumoniae (strain ATCC BAA-255 / R6).